Here is a 469-residue protein sequence, read N- to C-terminus: Neuraminidase (469 aa).

Residues 1–9 are Intravirion-facing; that stretch reads MNPNQKIIT. A helical membrane pass occupies residues 10 to 30; the sequence is IGSVSLTIATICFLMQIAILV. The interval 11 to 33 is involved in apical transport and lipid raft association; sequence GSVSLTIATICFLMQIAILVTTV. Residues 31 to 469 lie on the Virion surface side of the membrane; the sequence is TTVTLHFKQY…DGADINLMPI (439 aa). The interval 36 to 88 is hypervariable stalk region; the sequence is HFKQYECDSPANNQVMPCEPIIIERNITEIVYLTNTTIEKEICPKLVEYRNWS. N-linked (GlcNAc...) asparagine; by host glycans are attached at residues N61, N70, and N86. The tract at residues 91–469 is head of neuraminidase; sequence QCKITGFAPF…DGADINLMPI (379 aa). 8 cysteine pairs are disulfide-bonded: C92/C417, C124/C129, C183/C230, C232/C237, C278/C291, C280/C289, C318/C337, and C421/C447. Residue R118 coordinates substrate. N146 carries N-linked (GlcNAc...) asparagine; by host glycosylation. D151 acts as the Proton donor/acceptor in catalysis. R152 contributes to the substrate binding site. N200 and N234 each carry an N-linked (GlcNAc...) asparagine; by host glycan. Residue 276 to 277 participates in substrate binding; it reads EE. R292 serves as a coordination point for substrate. Ca(2+)-binding residues include D293, G297, and D324. R371 contacts substrate. Residue N402 is glycosylated (N-linked (GlcNAc...) asparagine; by host). The Nucleophile role is filled by Y406.

The protein belongs to the glycosyl hydrolase 34 family. In terms of assembly, homotetramer. Requires Ca(2+) as cofactor. Post-translationally, N-glycosylated.

Its subcellular location is the virion membrane. The protein localises to the host apical cell membrane. It carries out the reaction Hydrolysis of alpha-(2-&gt;3)-, alpha-(2-&gt;6)-, alpha-(2-&gt;8)- glycosidic linkages of terminal sialic acid residues in oligosaccharides, glycoproteins, glycolipids, colominic acid and synthetic substrates.. With respect to regulation, inhibited by the neuraminidase inhibitors zanamivir (Relenza) and oseltamivir (Tamiflu). These drugs interfere with the release of progeny virus from infected cells and are effective against all influenza strains. Resistance to neuraminidase inhibitors is quite rare. In terms of biological role, catalyzes the removal of terminal sialic acid residues from viral and cellular glycoconjugates. Cleaves off the terminal sialic acids on the glycosylated HA during virus budding to facilitate virus release. Additionally helps virus spread through the circulation by further removing sialic acids from the cell surface. These cleavages prevent self-aggregation and ensure the efficient spread of the progeny virus from cell to cell. Otherwise, infection would be limited to one round of replication. Described as a receptor-destroying enzyme because it cleaves a terminal sialic acid from the cellular receptors. May facilitate viral invasion of the upper airways by cleaving the sialic acid moieties on the mucin of the airway epithelial cells. Likely to plays a role in the budding process through its association with lipid rafts during intracellular transport. May additionally display a raft-association independent effect on budding. Plays a role in the determination of host range restriction on replication and virulence. Sialidase activity in late endosome/lysosome traffic seems to enhance virus replication. This is Neuraminidase from Aves (whales).